The following is a 360-amino-acid chain: Mannose-1-phosphate guanyltransferase beta-A (360 aa).

This sequence belongs to the transferase hexapeptide repeat family.

It carries out the reaction alpha-D-mannose 1-phosphate + GTP + H(+) = GDP-alpha-D-mannose + diphosphate. Its pathway is nucleotide-sugar biosynthesis; GDP-alpha-D-mannose biosynthesis; GDP-alpha-D-mannose from alpha-D-mannose 1-phosphate (GTP route): step 1/1. The polypeptide is Mannose-1-phosphate guanyltransferase beta-A (gmppb-a) (Xenopus laevis (African clawed frog)).